A 906-amino-acid chain; its full sequence is Cadherin-2 (906 aa).

Residues 1–25 form the signal peptide; sequence MCRIAGALRTLLPLLAALLQASVEA. A propeptide spanning residues 26–159 is cleaved from the precursor; sequence SGEIALCKTG…HSGHLQRQKR (134 aa). Phosphoserine; by FAM20C occurs at positions 96 and 135. Cadherin domains lie at 160-267, 268-382, 383-497, 498-603, and 604-714; these read DWVI…RPEF, LHQV…PPEF, TAMT…NPYF, APNP…DNAP, and QVLP…DVDR. Over 160–724 the chain is Extracellular; that stretch reads DWVIPPINLP…IVGAGLGTGA (565 aa). Glutamate 170 contributes to the Ca(2+) binding site. Asparagine 190 is a glycosylation site (N-linked (GlcNAc...) asparagine). Positions 226, 228, 259, 260, 261, 262, and 263 each coordinate Ca(2+). N-linked (GlcNAc...) asparagine glycosylation occurs at asparagine 273. Residues aspartate 293, aspartate 295, and asparagine 301 each coordinate Ca(2+). Asparagine 325 carries an N-linked (GlcNAc...) asparagine glycan. Aspartate 353 provides a ligand contact to Ca(2+). 4 N-linked (GlcNAc...) asparagine glycosylation sites follow: asparagine 402, asparagine 572, asparagine 651, and asparagine 692. Residues 725–745 traverse the membrane as a helical segment; that stretch reads IIAILLCIIILLILVLMFVVW. The Cytoplasmic portion of the chain corresponds to 746-906; that stretch reads MKRRDKERQA…LADMYGGGDD (161 aa). A compositionally biased stretch (low complexity) spans 863 to 880; that stretch reads SGSTAGSLSSLNSSSSGG. The segment at 863–884 is disordered; it reads SGSTAGSLSSLNSSSSGGEQDY.

Homodimer (via extracellular region). Can also form heterodimers with other cadherins (via extracellular region). Dimerization occurs in trans, i.e. with a cadherin chain from another cell. Interacts with CDCP1. Interacts with PCDH8; this complex may also include TAOK2. The interaction with PCDH8 may lead to internalization through TAOK2/p38 MAPK pathway. Identified in a complex containing FGFR4, NCAM1, CDH2, PLCG1, FRS2, SRC, SHC1, GAP43 and CTTN. May interact with OBSCN (via protein kinase domain 2). Interacts with FBXO45. Post-translationally, cleaved by MMP24. Ectodomain cleavage leads to the generation of a soluble 90 kDa N-terminal soluble fragment and a 45 kDa membrane-bound C-terminal fragment 1 (CTF1), which is further cleaved by gamma-secretase into a 35 kDa. Cleavage in neural stem cells by MMP24 affects CDH2-mediated anchorage of neural stem cells to ependymocytes in the adult subependymal zone, leading to modulate neural stem cell quiescence. May be phosphorylated by OBSCN.

It is found in the cell membrane. Its subcellular location is the sarcolemma. The protein localises to the cell junction. The protein resides in the cell surface. It localises to the desmosome. It is found in the adherens junction. Calcium-dependent cell adhesion protein; preferentially mediates homotypic cell-cell adhesion by dimerization with a CDH2 chain from another cell. Cadherins may thus contribute to the sorting of heterogeneous cell types. Acts as a regulator of neural stem cells quiescence by mediating anchorage of neural stem cells to ependymocytes in the adult subependymal zone: upon cleavage by MMP24, CDH2-mediated anchorage is affected, leading to modulate neural stem cell quiescence. Plays a role in cell-to-cell junction formation between pancreatic beta cells and neural crest stem (NCS) cells, promoting the formation of processes by NCS cells. Required for proper neurite branching. Required for pre- and postsynaptic organization. CDH2 may be involved in neuronal recognition mechanism. In hippocampal neurons, may regulate dendritic spine density. This is Cadherin-2 (CDH2) from Homo sapiens (Human).